The following is a 2226-amino-acid chain: DNA polymerase epsilon catalytic subunit A (2226 aa).

Residues 1240–1265 (RVSKVTSRKRRNGKANNVSDSEEEER) form a disordered region. The Zn(2+) site is built by C2112, C2115, C2134, and C2137. The CysA-type zinc finger occupies 2112–2137 (CDYCNYIRDIDFCRDEQKNIWNCSNC). The [4Fe-4S] cluster site is built by C2168, C2171, C2183, and C2185. Positions 2168 to 2185 (CSKCHQIKSDNMSEYCKC) match the CysB motif motif.

It belongs to the DNA polymerase type-B family. In terms of assembly, heterotetramer. Consists of 4 subunits: POL2, DPB2, DPB3 and DPB4. Requires [4Fe-4S] cluster as cofactor.

It is found in the nucleus. The catalysed reaction is DNA(n) + a 2'-deoxyribonucleoside 5'-triphosphate = DNA(n+1) + diphosphate. Its function is as follows. DNA polymerase II participates in chromosomal DNA replication. This chain is DNA polymerase epsilon catalytic subunit A (POL2), found in Debaryomyces hansenii (strain ATCC 36239 / CBS 767 / BCRC 21394 / JCM 1990 / NBRC 0083 / IGC 2968) (Yeast).